The primary structure comprises 224 residues: 7-cyano-7-deazaguanine synthase (224 aa).

Leu9–Leu19 is an ATP binding site. Cys189, Cys199, Cys202, and Cys205 together coordinate Zn(2+).

It belongs to the QueC family. It depends on Zn(2+) as a cofactor.

The catalysed reaction is 7-carboxy-7-deazaguanine + NH4(+) + ATP = 7-cyano-7-deazaguanine + ADP + phosphate + H2O + H(+). It functions in the pathway purine metabolism; 7-cyano-7-deazaguanine biosynthesis. Functionally, catalyzes the ATP-dependent conversion of 7-carboxy-7-deazaguanine (CDG) to 7-cyano-7-deazaguanine (preQ(0)). The polypeptide is 7-cyano-7-deazaguanine synthase (Ralstonia pickettii (strain 12J)).